A 141-amino-acid chain; its full sequence is uncharacterized protein (141 aa).

The helical transmembrane segment at 13-35 threads the bilayer; the sequence is PVIGVILMVAITVILAAVIASFV.

It localises to the membrane. This is an uncharacterized protein from Archaeoglobus fulgidus (strain ATCC 49558 / DSM 4304 / JCM 9628 / NBRC 100126 / VC-16).